The chain runs to 480 residues: Aspartyl/glutamyl-tRNA(Asn/Gln) amidotransferase subunit B (480 aa).

It belongs to the GatB/GatE family. GatB subfamily. Heterotrimer of A, B and C subunits.

It catalyses the reaction L-glutamyl-tRNA(Gln) + L-glutamine + ATP + H2O = L-glutaminyl-tRNA(Gln) + L-glutamate + ADP + phosphate + H(+). The catalysed reaction is L-aspartyl-tRNA(Asn) + L-glutamine + ATP + H2O = L-asparaginyl-tRNA(Asn) + L-glutamate + ADP + phosphate + 2 H(+). Allows the formation of correctly charged Asn-tRNA(Asn) or Gln-tRNA(Gln) through the transamidation of misacylated Asp-tRNA(Asn) or Glu-tRNA(Gln) in organisms which lack either or both of asparaginyl-tRNA or glutaminyl-tRNA synthetases. The reaction takes place in the presence of glutamine and ATP through an activated phospho-Asp-tRNA(Asn) or phospho-Glu-tRNA(Gln). In Streptococcus pneumoniae (strain ATCC 700669 / Spain 23F-1), this protein is Aspartyl/glutamyl-tRNA(Asn/Gln) amidotransferase subunit B.